The sequence spans 322 residues: HPr kinase/phosphorylase (322 aa).

Active-site residues include histidine 146 and lysine 167. 161–168 (GDSGLGKS) lines the ATP pocket. Serine 168 provides a ligand contact to Mg(2+). The active-site Proton acceptor; for phosphorylation activity. Proton donor; for dephosphorylation activity is the aspartate 185. The interval 209 to 218 (LEVRGLGLLD) is important for the catalytic mechanism of both phosphorylation and dephosphorylation. Glutamate 210 provides a ligand contact to Mg(2+). The active site involves arginine 250. The interval 271–276 (QVAAGR) is important for the catalytic mechanism of dephosphorylation.

It belongs to the HPrK/P family. As to quaternary structure, homohexamer. Requires Mg(2+) as cofactor.

The enzyme catalyses [HPr protein]-L-serine + ATP = [HPr protein]-O-phospho-L-serine + ADP + H(+). The catalysed reaction is [HPr protein]-O-phospho-L-serine + phosphate + H(+) = [HPr protein]-L-serine + diphosphate. Its function is as follows. Catalyzes the ATP- as well as the pyrophosphate-dependent phosphorylation of a specific serine residue in HPr, a phosphocarrier protein of the phosphoenolpyruvate-dependent sugar phosphotransferase system (PTS). HprK/P also catalyzes the pyrophosphate-producing, inorganic phosphate-dependent dephosphorylation (phosphorolysis) of seryl-phosphorylated HPr (P-Ser-HPr). The polypeptide is HPr kinase/phosphorylase (Burkholderia multivorans (strain ATCC 17616 / 249)).